The sequence spans 451 residues: Ubiquitin hydrolase B (451 aa).

One can recognise a USP domain in the interval Arg-19–Val-450. Residues Asn-83 to Pro-115 show a composition bias toward low complexity. A disordered region spans residues Asn-83–Asp-154. A compositionally biased stretch (polar residues) spans Ile-116–Thr-135. Catalysis depends on His-399, which acts as the Nucleophile. His-408 acts as the Proton acceptor in catalysis.

Belongs to the peptidase C19 family. As to quaternary structure, interacts with mkkA (via F-box/WD40 domains).

It carries out the reaction Thiol-dependent hydrolysis of ester, thioester, amide, peptide and isopeptide bonds formed by the C-terminal Gly of ubiquitin (a 76-residue protein attached to proteins as an intracellular targeting signal).. Required for proper prespore cell patterning. Plays a role in stabilizing mkkA by preventing it from being targeted for degradation. ubcB and ubpB differentially control ubiquitination/deubiquitination and degradation of mkkA in a cell-type-specific and temporally regulated manner. The chain is Ubiquitin hydrolase B (ubpB) from Dictyostelium discoideum (Social amoeba).